The primary structure comprises 131 residues: Small ribosomal subunit protein uS8 (131 aa).

The protein belongs to the universal ribosomal protein uS8 family. As to quaternary structure, part of the 30S ribosomal subunit. Contacts proteins S5 and S12.

In terms of biological role, one of the primary rRNA binding proteins, it binds directly to 16S rRNA central domain where it helps coordinate assembly of the platform of the 30S subunit. The chain is Small ribosomal subunit protein uS8 from Acinetobacter baumannii (strain AB307-0294).